Reading from the N-terminus, the 548-residue chain is Chaperonin GroEL (548 aa).

Residues 30-33 (TLGP), lysine 51, 87-91 (DGTTT), glycine 415, 479-481 (NAA), and aspartate 495 contribute to the ATP site.

This sequence belongs to the chaperonin (HSP60) family. Forms a cylinder of 14 subunits composed of two heptameric rings stacked back-to-back. Interacts with the co-chaperonin GroES.

The protein resides in the cytoplasm. It catalyses the reaction ATP + H2O + a folded polypeptide = ADP + phosphate + an unfolded polypeptide.. Its function is as follows. Together with its co-chaperonin GroES, plays an essential role in assisting protein folding. The GroEL-GroES system forms a nano-cage that allows encapsulation of the non-native substrate proteins and provides a physical environment optimized to promote and accelerate protein folding. The protein is Chaperonin GroEL of Pseudomonas fluorescens (strain SBW25).